A 445-amino-acid chain; its full sequence is Na(+)-translocating NADH-quinone reductase subunit A (445 aa).

Belongs to the NqrA family. Composed of six subunits; NqrA, NqrB, NqrC, NqrD, NqrE and NqrF.

It carries out the reaction a ubiquinone + n Na(+)(in) + NADH + H(+) = a ubiquinol + n Na(+)(out) + NAD(+). NQR complex catalyzes the reduction of ubiquinone-1 to ubiquinol by two successive reactions, coupled with the transport of Na(+) ions from the cytoplasm to the periplasm. NqrA to NqrE are probably involved in the second step, the conversion of ubisemiquinone to ubiquinol. This is Na(+)-translocating NADH-quinone reductase subunit A from Pseudomonas aeruginosa (strain UCBPP-PA14).